Consider the following 306-residue polypeptide: Ribonuclease Z (306 aa).

The Zn(2+) site is built by histidine 63, histidine 65, aspartate 67, histidine 68, histidine 141, aspartate 211, and histidine 269. Aspartate 67 acts as the Proton acceptor in catalysis.

The protein belongs to the RNase Z family. In terms of assembly, homodimer. Requires Zn(2+) as cofactor.

It carries out the reaction Endonucleolytic cleavage of RNA, removing extra 3' nucleotides from tRNA precursor, generating 3' termini of tRNAs. A 3'-hydroxy group is left at the tRNA terminus and a 5'-phosphoryl group is left at the trailer molecule.. Zinc phosphodiesterase, which displays some tRNA 3'-processing endonuclease activity. Probably involved in tRNA maturation, by removing a 3'-trailer from precursor tRNA. This chain is Ribonuclease Z, found in Macrococcus caseolyticus (strain JCSC5402) (Macrococcoides caseolyticum).